A 223-amino-acid polypeptide reads, in one-letter code: N-terminal Xaa-Pro-Lys N-methyltransferase 1 (223 aa).

Residue M1 is modified to N-acetylmethionine. Position 2 is an N-acetylthreonine; in N-terminal Xaa-Pro-Lys N-methyltransferase 1, N-terminally processed (T2). Residues G69, R74, 91-93 (DIT), 119-120 (LQ), and Q135 contribute to the S-adenosyl-L-methionine site.

Belongs to the methyltransferase superfamily. NTM1 family.

The protein resides in the nucleus. It catalyses the reaction N-terminal L-alanyl-L-prolyl-L-lysyl-[protein] + 3 S-adenosyl-L-methionine = N-terminal N,N,N-trimethyl-L-alanyl-L-prolyl-L-lysyl-[protein] + 3 S-adenosyl-L-homocysteine + 3 H(+). It carries out the reaction N-terminal L-seryl-L-prolyl-L-lysyl-[protein] + 3 S-adenosyl-L-methionine = N-terminal N,N,N-trimethyl-L-seryl-L-prolyl-L-lysyl-[protein] + 3 S-adenosyl-L-homocysteine + 3 H(+). The catalysed reaction is N-terminal L-prolyl-L-prolyl-L-lysyl-[protein] + 2 S-adenosyl-L-methionine = N-terminal N,N-dimethyl-L-prolyl-L-prolyl-L-lysyl-[protein] + 2 S-adenosyl-L-homocysteine + 2 H(+). Functionally, distributive alpha-N-methyltransferase that methylates the N-terminus of target proteins containing the N-terminal motif [Ala/Gly/Pro/Ser]-Pro-Lys when the initiator Met is cleaved. Specifically catalyzes mono-, di- or tri-methylation of the exposed alpha-amino group of the Ala, Gly or Ser residue in the [Ala/Gly/Ser]-Pro-Lys motif and mono- or di-methylation of Pro in the Pro-Pro-Lys motif. Some of the substrates may be primed by NTMT2-mediated monomethylation. Catalyzes the trimethylation of the N-terminal Gly in CENPA (after removal of Met-1). Responsible for the N-terminal methylation of KLHL31, MYL2, MYL3, RB1, RCC1, RPL23A and SET. Required during mitosis for normal bipolar spindle formation and chromosome segregation via its action on RCC1. In Homo sapiens (Human), this protein is N-terminal Xaa-Pro-Lys N-methyltransferase 1 (NTMT1).